Reading from the N-terminus, the 291-residue chain is Urease accessory protein UreD (291 aa).

It belongs to the UreD family. In terms of assembly, ureD, UreF and UreG form a complex that acts as a GTP-hydrolysis-dependent molecular chaperone, activating the urease apoprotein by helping to assemble the nickel containing metallocenter of UreC. The UreE protein probably delivers the nickel.

It localises to the cytoplasm. Its function is as follows. Required for maturation of urease via the functional incorporation of the urease nickel metallocenter. In Acinetobacter baumannii (strain SDF), this protein is Urease accessory protein UreD.